The following is a 155-amino-acid chain: Ribosomal RNA large subunit methyltransferase H (155 aa).

S-adenosyl-L-methionine contacts are provided by residues Leu-72, Gly-103, and 122 to 127 (LSPLTF).

This sequence belongs to the RNA methyltransferase RlmH family. Homodimer.

It localises to the cytoplasm. It catalyses the reaction pseudouridine(1915) in 23S rRNA + S-adenosyl-L-methionine = N(3)-methylpseudouridine(1915) in 23S rRNA + S-adenosyl-L-homocysteine + H(+). Its function is as follows. Specifically methylates the pseudouridine at position 1915 (m3Psi1915) in 23S rRNA. The protein is Ribosomal RNA large subunit methyltransferase H of Alkalilimnicola ehrlichii (strain ATCC BAA-1101 / DSM 17681 / MLHE-1).